Consider the following 409-residue polypeptide: Autophagy-related protein 21 (409 aa).

4 WD repeats span residues 1–35, 221–261, 273–312, and 361–402; these read MKVL…KCFE, VHKG…TLQS, TRPC…QQNK, and KVDD…GECI. The short motif at 269 to 273 is the L/FRRG motif element; sequence FRRGT.

It belongs to the WD repeat PROPPIN family.

The protein resides in the cytoplasm. It is found in the membrane. The protein localises to the vacuole membrane. Required for cytoplasm to vacuole transport (Cvt) vesicles formation and mitophagy. Involved in binding of phosphatidylethanolamine to ATG8 and in recruitment of ATG8 and ATG5 to the pre-autophagosomal structure. Protects ATG8 from ARG4-mediated cleavage. The chain is Autophagy-related protein 21 (ATG21) from Eremothecium gossypii (strain ATCC 10895 / CBS 109.51 / FGSC 9923 / NRRL Y-1056) (Yeast).